The chain runs to 201 residues: Glycerol-3-phosphate acyltransferase (201 aa).

5 helical membrane-spanning segments follow: residues 10 to 30 (MLIGALIFGYVLGSIPFGLIL), 60 to 80 (LAAATLILDALKGTAAALIAA), 86 to 106 (AAIAAGFGAFIGHLFPVWIGF), 116 to 136 (LGVLIGLAWAGALVFAAAWIV), and 166 to 186 (ALAALFAIMTVIVFIKHRANI).

It belongs to the PlsY family. As to quaternary structure, probably interacts with PlsX.

The protein resides in the cell inner membrane. It carries out the reaction an acyl phosphate + sn-glycerol 3-phosphate = a 1-acyl-sn-glycero-3-phosphate + phosphate. Its pathway is lipid metabolism; phospholipid metabolism. In terms of biological role, catalyzes the transfer of an acyl group from acyl-phosphate (acyl-PO(4)) to glycerol-3-phosphate (G3P) to form lysophosphatidic acid (LPA). This enzyme utilizes acyl-phosphate as fatty acyl donor, but not acyl-CoA or acyl-ACP. In Brucella abortus (strain 2308), this protein is Glycerol-3-phosphate acyltransferase.